The chain runs to 429 residues: Enolase (429 aa).

Glutamine 162 contacts (2R)-2-phosphoglycerate. Glutamate 204 (proton donor) is an active-site residue. Residues aspartate 241, glutamate 286, and aspartate 313 each coordinate Mg(2+). (2R)-2-phosphoglycerate contacts are provided by lysine 338, arginine 367, serine 368, and lysine 389. Residue lysine 338 is the Proton acceptor of the active site.

It belongs to the enolase family. Mg(2+) is required as a cofactor.

The protein localises to the cytoplasm. It is found in the secreted. The protein resides in the cell surface. It carries out the reaction (2R)-2-phosphoglycerate = phosphoenolpyruvate + H2O. The protein operates within carbohydrate degradation; glycolysis; pyruvate from D-glyceraldehyde 3-phosphate: step 4/5. Functionally, catalyzes the reversible conversion of 2-phosphoglycerate (2-PG) into phosphoenolpyruvate (PEP). It is essential for the degradation of carbohydrates via glycolysis. This is Enolase from Shouchella clausii (strain KSM-K16) (Alkalihalobacillus clausii).